A 241-amino-acid chain; its full sequence is ATP synthase subunit a (241 aa).

Helical transmembrane passes span asparagine 29–valine 49, isoleucine 86–proline 106, histidine 114–phenylalanine 134, isoleucine 144–phenylalanine 164, leucine 177–asparagine 197, leucine 200–valine 220, and alanine 221–lysine 241.

It belongs to the ATPase A chain family. As to quaternary structure, F-type ATPases have 2 components, CF(1) - the catalytic core - and CF(0) - the membrane proton channel. CF(1) has five subunits: alpha(3), beta(3), gamma(1), delta(1), epsilon(1). CF(0) has three main subunits: a(1), b(2) and c(9-12). The alpha and beta chains form an alternating ring which encloses part of the gamma chain. CF(1) is attached to CF(0) by a central stalk formed by the gamma and epsilon chains, while a peripheral stalk is formed by the delta and b chains.

It localises to the cell membrane. In terms of biological role, key component of the proton channel; it plays a direct role in the translocation of protons across the membrane. This is ATP synthase subunit a from Wolbachia sp. subsp. Brugia malayi (strain TRS).